Here is an 89-residue protein sequence, read N- to C-terminus: Small ribosomal subunit protein uS15 (89 aa).

The span at 1 to 16 (MSVADIKKQDIVKDNG) shows a compositional bias: basic and acidic residues. Residues 1 to 24 (MSVADIKKQDIVKDNGRSANDTGS) are disordered.

The protein belongs to the universal ribosomal protein uS15 family. In terms of assembly, part of the 30S ribosomal subunit. Forms a bridge to the 50S subunit in the 70S ribosome, contacting the 23S rRNA.

Its function is as follows. One of the primary rRNA binding proteins, it binds directly to 16S rRNA where it helps nucleate assembly of the platform of the 30S subunit by binding and bridging several RNA helices of the 16S rRNA. Functionally, forms an intersubunit bridge (bridge B4) with the 23S rRNA of the 50S subunit in the ribosome. The sequence is that of Small ribosomal subunit protein uS15 from Ralstonia pickettii (strain 12J).